An 856-amino-acid chain; its full sequence is Dual specificity protein kinase TTK (856 aa).

At methionine 1 the chain carries N-acetylmethionine. Threonine 32 is modified (phosphothreonine). A phosphoserine mark is found at serine 36, serine 277, and serine 342. Threonine 380 bears the Phosphothreonine mark. 3 positions are modified to phosphoserine: serine 383, serine 435, and serine 454. The 267-residue stretch at 524-790 (YSILKQIGSG…IPELLTHPYV (267 aa)) folds into the Protein kinase domain. Residues 530–538 (IGSGGSSKV) and lysine 552 contribute to the ATP site. The active-site Proton acceptor is the aspartate 646. Serine 820 is modified (phosphoserine). The tract at residues 837 to 856 (CGEGQDSSSSKTFDKKRERK) is disordered.

Belongs to the protein kinase superfamily. Ser/Thr protein kinase family. Interacts with TPR; the interactions occurs in a microtubule-independent manner. Interacts with MAD1L1 and MAD2L1. Post-translationally, autophosphorylated. As to expression, present in rapidly proliferating cell lines; high levels in testis, bone marrow, spleen and thymus. Low levels in brain, heart, lung and kidney.

The catalysed reaction is L-seryl-[protein] + ATP = O-phospho-L-seryl-[protein] + ADP + H(+). It carries out the reaction L-threonyl-[protein] + ATP = O-phospho-L-threonyl-[protein] + ADP + H(+). It catalyses the reaction L-tyrosyl-[protein] + ATP = O-phospho-L-tyrosyl-[protein] + ADP + H(+). With respect to regulation, inhibited by the ATP-competitive kinase inhibitor, SP600125. Functionally, involved in mitotic spindle assembly checkpoint signaling, a process that delays anaphase until chromosomes are bioriented on the spindle, and in the repair of incorrect mitotic kinetochore-spindle microtubule attachments. Phosphorylates MAD1L1 to promote the mitotic spindle assembly checkpoint. Phosphorylates CDCA8/Borealin leading to enhanced AURKB activity at the kinetochore. Phosphorylates SKA3 at 'Ser-34' leading to dissociation of the SKA complex from microtubules and destabilization of microtubule-kinetochore attachments. Phosphorylates KNL1, KNTC1 and autophosphorylates. Phosphorylates MCRS1 which enhances recruitment of KIF2A to the minus end of spindle microtubules and promotes chromosome alignment. This is Dual specificity protein kinase TTK (Ttk) from Mus musculus (Mouse).